Here is a 463-residue protein sequence, read N- to C-terminus: Asparagine--tRNA ligase (463 aa).

It belongs to the class-II aminoacyl-tRNA synthetase family. As to quaternary structure, homodimer.

The protein localises to the cytoplasm. The catalysed reaction is tRNA(Asn) + L-asparagine + ATP = L-asparaginyl-tRNA(Asn) + AMP + diphosphate + H(+). The protein is Asparagine--tRNA ligase of Acholeplasma laidlawii (strain PG-8A).